Consider the following 117-residue polypeptide: Large ribosomal subunit protein uL18 (117 aa).

This sequence belongs to the universal ribosomal protein uL18 family. As to quaternary structure, part of the 50S ribosomal subunit; part of the 5S rRNA/L5/L18/L25 subcomplex. Contacts the 5S and 23S rRNAs.

This is one of the proteins that bind and probably mediate the attachment of the 5S RNA into the large ribosomal subunit, where it forms part of the central protuberance. This Tolumonas auensis (strain DSM 9187 / NBRC 110442 / TA 4) protein is Large ribosomal subunit protein uL18.